Reading from the N-terminus, the 74-residue chain is ATP synthase subunit 9, mitochondrial (74 aa).

The next 2 helical transmembrane spans lie at 16 to 36 (GLIG…LGVA) and 50 to 70 (ILGF…AFLL).

The protein belongs to the ATPase C chain family. F-type ATPases have 2 components, CF(1) - the catalytic core - and CF(0) - the membrane proton channel. CF(1) has five subunits: alpha(3), beta(3), gamma(1), delta(1), epsilon(1). CF(0) has three main subunits: a, b and c.

Its subcellular location is the mitochondrion membrane. Functionally, mitochondrial membrane ATP synthase (F(1)F(0) ATP synthase or Complex V) produces ATP from ADP in the presence of a proton gradient across the membrane which is generated by electron transport complexes of the respiratory chain. F-type ATPases consist of two structural domains, F(1) - containing the extramembraneous catalytic core and F(0) - containing the membrane proton channel, linked together by a central stalk and a peripheral stalk. During catalysis, ATP synthesis in the catalytic domain of F(1) is coupled via a rotary mechanism of the central stalk subunits to proton translocation. Part of the complex F(0) domain. A homomeric c-ring of probably 10 subunits is part of the complex rotary element. The protein is ATP synthase subunit 9, mitochondrial (ATP9) of Trichophyton rubrum (Athlete's foot fungus).